The chain runs to 598 residues: NADH-quinone oxidoreductase subunit C/D (598 aa).

The interval 1 to 190 is NADH dehydrogenase I subunit C; that stretch reads MSIFTQEVSA…EAFSLDDERL (190 aa). The segment at 214–598 is NADH dehydrogenase I subunit D; the sequence is DYLFLNLGPN…IDFVMADVDR (385 aa).

It in the N-terminal section; belongs to the complex I 30 kDa subunit family. In the C-terminal section; belongs to the complex I 49 kDa subunit family. As to quaternary structure, NDH-1 is composed of 13 different subunits. Subunits NuoB, CD, E, F, and G constitute the peripheral sector of the complex.

It localises to the cell inner membrane. It catalyses the reaction a quinone + NADH + 5 H(+)(in) = a quinol + NAD(+) + 4 H(+)(out). Functionally, NDH-1 shuttles electrons from NADH, via FMN and iron-sulfur (Fe-S) centers, to quinones in the respiratory chain. The immediate electron acceptor for the enzyme in this species is believed to be ubiquinone. Couples the redox reaction to proton translocation (for every two electrons transferred, four hydrogen ions are translocated across the cytoplasmic membrane), and thus conserves the redox energy in a proton gradient. The polypeptide is NADH-quinone oxidoreductase subunit C/D (Shewanella woodyi (strain ATCC 51908 / MS32)).